Consider the following 284-residue polypeptide: Pantothenate synthetase (284 aa).

30–37 (MGNLHDGH) contributes to the ATP binding site. H37 acts as the Proton donor in catalysis. Residue Q61 coordinates (R)-pantoate. Q61 lines the beta-alanine pocket. Position 149–152 (149–152 (GEKD)) interacts with ATP. Q155 is a (R)-pantoate binding site. Residues I178 and 186–189 (LSSR) contribute to the ATP site.

This sequence belongs to the pantothenate synthetase family. As to quaternary structure, homodimer.

The protein resides in the cytoplasm. The enzyme catalyses (R)-pantoate + beta-alanine + ATP = (R)-pantothenate + AMP + diphosphate + H(+). The protein operates within cofactor biosynthesis; (R)-pantothenate biosynthesis; (R)-pantothenate from (R)-pantoate and beta-alanine: step 1/1. Catalyzes the condensation of pantoate with beta-alanine in an ATP-dependent reaction via a pantoyl-adenylate intermediate. This chain is Pantothenate synthetase, found in Salmonella choleraesuis (strain SC-B67).